The primary structure comprises 710 residues: MDQERHEFSIDWAGRTLSVEVGQLAKQANGAVLVRYGDTAVLSTATASKEPKDLPFFPLTVNYEERLYAAGKIPGGFIKREGRPSERAILTSRLIDRPIRPLFPDGFRNDVQVISIVMSSDQDASPEMAAMIGSSLALCVSDIPFEGPIAGVTVGRINGEFIMNPTPAQLAESDIDLTVAGTKEAINMVEAGAKEVPEDVMLEAILAGHENIKKMIAFQEKVVEVCGKEKREVQLKTFDAELEARLRESAEASIKEAVRIAEKHARQDAIDEIIAAQVEQHSDDDSINVDEVKEILQMFVKEEVRRLITVEKIRPDGRGVDEIRPLSSQIKLLPRTHGSGLFTRGQTQALSVCTLGALGDVQVLDGLGIEETKRFMHHYNFPQFSVGETGPIRAPGRREIGHGALGERALEQVIPSEQEFPYTIRLVSEVLESNGSTSQASICASTLAMMDAGVPIKAPVAGIAMGLVKQGEHMTVLTDIQGMEDALGDMDFKVAGTANGVTALQMDIKISGINREVLEQALEQAKQGRMKILSNMMEAIDKPRAELSEYAPKILTLTINPDKIRDVIGPSGKVINKIIEETGVKIDIEQDGTVYISSLDTAMNQKAKQIIEDLVREVQVGETYHGKVKRIEKFGAFVELFKGKDGLLHISQIAEERINKVEDVFKLGDEVDVRVTEIDNQGRVNLSRKVLLKEQREKLEKEEAKDTANE.

Residues aspartate 485 and aspartate 491 each coordinate Mg(2+). The KH domain occupies 552-611 (PKILTLTINPDKIRDVIGPSGKVINKIIEETGVKIDIEQDGTVYISSLDTAMNQKAKQII). One can recognise an S1 motif domain in the interval 621–689 (GETYHGKVKR…NQGRVNLSRK (69 aa)).

Belongs to the polyribonucleotide nucleotidyltransferase family. Requires Mg(2+) as cofactor.

It localises to the cytoplasm. The catalysed reaction is RNA(n+1) + phosphate = RNA(n) + a ribonucleoside 5'-diphosphate. In terms of biological role, involved in mRNA degradation. Catalyzes the phosphorolysis of single-stranded polyribonucleotides processively in the 3'- to 5'-direction. This Shouchella clausii (strain KSM-K16) (Alkalihalobacillus clausii) protein is Polyribonucleotide nucleotidyltransferase.